Reading from the N-terminus, the 209-residue chain is Large ribosomal subunit protein uL4 (209 aa).

The interval 45–77 (RQGTHKAKERAEVTGSTRKIKKQKGTGTARAGS) is disordered.

Belongs to the universal ribosomal protein uL4 family. As to quaternary structure, part of the 50S ribosomal subunit.

Its function is as follows. One of the primary rRNA binding proteins, this protein initially binds near the 5'-end of the 23S rRNA. It is important during the early stages of 50S assembly. It makes multiple contacts with different domains of the 23S rRNA in the assembled 50S subunit and ribosome. Forms part of the polypeptide exit tunnel. This is Large ribosomal subunit protein uL4 from Flavobacterium johnsoniae (strain ATCC 17061 / DSM 2064 / JCM 8514 / BCRC 14874 / CCUG 350202 / NBRC 14942 / NCIMB 11054 / UW101) (Cytophaga johnsonae).